Here is a 71-residue protein sequence, read N- to C-terminus: Small ribosomal subunit protein bS18 (71 aa).

Belongs to the bacterial ribosomal protein bS18 family. In terms of assembly, part of the 30S ribosomal subunit. Forms a tight heterodimer with protein bS6.

Functionally, binds as a heterodimer with protein bS6 to the central domain of the 16S rRNA, where it helps stabilize the platform of the 30S subunit. This Acaryochloris marina (strain MBIC 11017) protein is Small ribosomal subunit protein bS18.